The primary structure comprises 410 residues: MSAKKLEGSSAPANRRDPYEVLCVSKDANDQEIKSAYRKLALKYHPDKNANNPDASELFKEVAFSYSILSDPEKRRHYDNAGFEALDADGMDMEIDLSNLGTVNTMFAALFSKLGVPIKTTVSANVLEEAMNGTVTVRPLPIGTSVSGKVEKQCAHFFGVTISEQQAESGVVVRVTSTAQSKFKLLYFEQDSSGGYGLALQEEREKTGKVTSAGMYFLHFQVYRMDTTVNALAAAKDPESAFFKRLEGLQPCEVSELKAGTHIFAVYGDNFFKTASYTIEALCAKTYEDTTEKLKEIEAQILRKRNELRQFETEYRKALARFQEVTNRYTQEKQTVDELLKQRDTIHSTFSVVKTPSGNNLSNGSSSKAQGDESKGDGDSAGEEGGTENRDKSKRKWFNLNLKGSDKKLG.

The J domain occupies 17–82 (DPYEVLCVSK…EKRRHYDNAG (66 aa)). The stretch at 284-344 (AKTYEDTTEK…TVDELLKQRD (61 aa)) forms a coiled coil. The tract at residues 351–410 (SVVKTPSGNNLSNGSSSKAQGDESKGDGDSAGEEGGTENRDKSKRKWFNLNLKGSDKKLG) is disordered. Residues 357–367 (SGNNLSNGSSS) are compositionally biased toward low complexity.

It belongs to the DnaJ family. B/II subfamily. Expressed at high levels in root cap, root tip meristematic region and elongation zones, and at lower levels in mature part of roots (at protein level). Constitutively expressed in seedlings, etiolated or not, roots, rosette leaves, cauline leaves, stems, flowers, siliques and pollen.

It localises to the cytoplasm. It is found in the cytoskeleton. Its subcellular location is the endoplasmic reticulum membrane. The protein resides in the golgi apparatus membrane. Its function is as follows. Plays a continuous role in plant development probably in the structural organization of compartments. Seems to be involved in early gravitropic signal transduction within the gravity-perceiving cells (statocytes), where it influences pH changes and auxin distribution. Probably affects the localization and/or activity of auxin efflux carrier components (PIN proteins) or other proteins involved in lateral auxin transport. In Arabidopsis thaliana (Mouse-ear cress), this protein is Chaperone protein dnaJ 15 (ATJ15).